We begin with the raw amino-acid sequence, 180 residues long: Centromere protein M (180 aa).

It is found in the nucleus. Its subcellular location is the chromosome. The protein resides in the centromere. Probable component of a centromeric complex involved in assembly of kinetochore proteins, mitotic progression and chromosome segregation. This Xenopus laevis (African clawed frog) protein is Centromere protein M (cenpm).